The primary structure comprises 284 residues: Ubiquinone biosynthesis protein COQ4, mitochondrial (284 aa).

Zn(2+) contacts are provided by His165, Asp166, His169, and Glu181.

The protein belongs to the COQ4 family. Component of a multi-subunit COQ enzyme complex, composed of at least COQ3, COQ4, COQ5, COQ6, COQ7 and COQ9. Zn(2+) is required as a cofactor.

The protein localises to the mitochondrion inner membrane. The enzyme catalyses a 4-hydroxy-3-methoxy-5-(all-trans-polyprenyl)benzoate + H(+) = a 2-methoxy-6-(all-trans-polyprenyl)phenol + CO2. It functions in the pathway cofactor biosynthesis; ubiquinone biosynthesis. Lyase that catalyzes the C1-decarboxylation of 4-hydroxy-3-methoxy-5-(all-trans-polyprenyl)benzoic acid into 2-methoxy-6-(all-trans-polyprenyl)phenol during ubiquinone biosynthesis. In Ajellomyces dermatitidis (strain ER-3 / ATCC MYA-2586) (Blastomyces dermatitidis), this protein is Ubiquinone biosynthesis protein COQ4, mitochondrial.